The sequence spans 496 residues: Pup--protein ligase (496 aa).

Residue Glu30 coordinates Mg(2+). Arg73 contributes to the ATP binding site. A Mg(2+)-binding site is contributed by Tyr75. Residue Asp77 is the Proton acceptor of the active site. A Mg(2+)-binding site is contributed by Glu83. 2 residues coordinate ATP: Thr86 and Trp450.

The protein belongs to the Pup ligase/Pup deamidase family. Pup-conjugating enzyme subfamily.

The catalysed reaction is ATP + [prokaryotic ubiquitin-like protein]-L-glutamate + [protein]-L-lysine = ADP + phosphate + N(6)-([prokaryotic ubiquitin-like protein]-gamma-L-glutamyl)-[protein]-L-lysine.. It participates in protein degradation; proteasomal Pup-dependent pathway. It functions in the pathway protein modification; protein pupylation. Its function is as follows. Catalyzes the covalent attachment of the prokaryotic ubiquitin-like protein modifier Pup to the proteasomal substrate proteins, thereby targeting them for proteasomal degradation. This tagging system is termed pupylation. The ligation reaction involves the side-chain carboxylate of the C-terminal glutamate of Pup and the side-chain amino group of a substrate lysine. This Bifidobacterium animalis subsp. lactis (strain AD011) protein is Pup--protein ligase.